Consider the following 87-residue polypeptide: U3-theraphotoxin-Hhn1a 2 (87 aa).

A signal peptide spans 1 to 24; sequence MVNMKASMFLTFAGLVLLFVVCYA. Positions 25–52 are excised as a propeptide; that stretch reads SESEEKEFPKEMLSSIFAVDDDFKQEER. Cystine bridges form between C54/C67, C61/C72, and C66/C79.

The protein belongs to the neurotoxin 10 (Hwtx-1) family. 51 (Hntx-8) subfamily. Hntx-8 sub-subfamily. As to expression, expressed by the venom gland.

The protein resides in the secreted. Ion channel inhibitor. The sequence is that of U3-theraphotoxin-Hhn1a 2 from Cyriopagopus hainanus (Chinese bird spider).